The following is a 202-amino-acid chain: Small ribosomal subunit protein uS4c (202 aa).

Residues 90 to 153 (MRLDNIIFRL…KSQAIISKNL (64 aa)) enclose the S4 RNA-binding domain.

The protein belongs to the universal ribosomal protein uS4 family. Part of the 30S ribosomal subunit. Contacts protein S5. The interaction surface between S4 and S5 is involved in control of translational fidelity.

It localises to the plastid. The protein resides in the chloroplast. In terms of biological role, one of the primary rRNA binding proteins, it binds directly to 16S rRNA where it nucleates assembly of the body of the 30S subunit. Its function is as follows. With S5 and S12 plays an important role in translational accuracy. The chain is Small ribosomal subunit protein uS4c (rps4) from Rosulabryum capillare (Capillary thread-moss).